A 190-amino-acid polypeptide reads, in one-letter code: Putative manganese efflux pump MntP (190 aa).

A run of 6 helical transmembrane segments spans residues F3–V23, L37–I57, H72–W88, I111–V131, V138–H158, and F164–V184.

It belongs to the MntP (TC 9.B.29) family.

The protein resides in the cell membrane. Functionally, probably functions as a manganese efflux pump. In Corynebacterium glutamicum (strain ATCC 13032 / DSM 20300 / JCM 1318 / BCRC 11384 / CCUG 27702 / LMG 3730 / NBRC 12168 / NCIMB 10025 / NRRL B-2784 / 534), this protein is Putative manganese efflux pump MntP.